The sequence spans 372 residues: MGAQAPLRLPAAPPLAVCGYTSVLLLFAFCLPGSRASNQPAGGGGDCPGGRGKSNCSELNLRESDIRVCDESSCKYGGVCKEDGDGLKCACQFQCHTNYIPVCGSNGDTYQNECFLRRAACKHQKDITVVARGPCYSDNGSGSGEGEEEGSGAGAHRKHSKCGPCKYKAECDEDAENVGCVCNIDCSGYSFNPVCASDGSSYNNPCFVREASCIKQEQIDIRHLGHCTDTDDVSLLGKKDDGLQYRPDVKDAGDEREDVYIGSHMPCPENLNGYCIHGKCEFIYSTQKASCRCESGYTGQHCEKTDFSILYVVPSRQKLTHVLIAAIIGAVQIAIIVAIVMCITRKCPKNNRGRRQKQNLGHFTSDTSSRMV.

The N-terminal stretch at methionine 1 to alanine 36 is a signal peptide. Residues serine 37 to valine 322 are Extracellular-facing. N-linked (GlcNAc...) asparagine glycosylation is present at asparagine 55. One can recognise a Kazal-like 1 domain in the interval alanine 90 to serine 137. 3 disulfides stabilise this stretch: cysteine 91-cysteine 121, cysteine 95-cysteine 114, and cysteine 103-cysteine 135. N-linked (GlcNAc...) asparagine glycosylation is present at asparagine 139. The interval asparagine 139–lysine 161 is disordered. The Kazal-like 2 domain maps to valine 181–aspartate 229. 6 disulfide bridges follow: cysteine 182–cysteine 213, cysteine 186–cysteine 206, cysteine 195–cysteine 227, cysteine 267–cysteine 280, cysteine 275–cysteine 291, and cysteine 293–cysteine 302. One can recognise an EGF-like domain in the interval serine 263 to glutamate 303. Residues leucine 323 to isoleucine 343 form a helical membrane-spanning segment. At threonine 344–valine 372 the chain is on the cytoplasmic side. A disordered region spans residues asparagine 351–valine 372. Over residues glutamine 358–valine 372 the composition is skewed to polar residues.

The protein belongs to the tomoregulin family. In terms of assembly, may interact with ST14. In terms of tissue distribution, maily expressed in neurons. Expressed in brain, neurointermediate lobe, pars distalis, pancreas, ovary and testis.

The protein localises to the cell membrane. Its function is as follows. Neuron-specific restriction factor that prevents herpes simplex virus 1 (HHV-1) infection in the brain by blocking viral entry. Also able to restrict herpes simplex virus 2 (HHV-2) infection, although to a lesser extent. Acts by preventing the association between the viral glycoprotein D (gD) and its cell surface receptor NECTIN1, thereby inhibiting fusion of the virus and the cell membrane. Also able to prevent the association between the viral glycoprotein B (gB) and MYH9/NMMHC-IIA and MYH10/NMMHC-IIB receptors. In Mus musculus (Mouse), this protein is Tomoregulin-1.